The chain runs to 132 residues: L-ectoine synthase (132 aa).

Belongs to the ectoine synthase family.

It catalyses the reaction (2S)-4-acetamido-2-aminobutanoate = L-ectoine + H2O. Its pathway is amine and polyamine biosynthesis; ectoine biosynthesis; L-ectoine from L-aspartate 4-semialdehyde: step 3/3. In terms of biological role, catalyzes the circularization of gamma-N-acetyl-alpha,gamma-diaminobutyric acid (ADABA) to ectoine (1,4,5,6-tetrahydro-2-methyl-4-pyrimidine carboxylic acid), which is an excellent osmoprotectant. The sequence is that of L-ectoine synthase (ectC) from Streptomyces anulatus (Streptomyces chrysomallus).